The chain runs to 59 residues: Three-finger toxin MS1 (59 aa).

4 disulfides stabilise this stretch: C3-C22, C17-C39, C41-C52, and C53-C58.

The protein belongs to the three-finger toxin family. Short-chain subfamily. Type I alpha-neurotoxin sub-subfamily. Expressed by the venom gland.

It localises to the secreted. Its function is as follows. Produces peripheral paralysis by blocking neuromuscular transmission at the postsynaptic site. Binds to and inhibits the endogenous nicotinic acetylcholine receptors (nAChR) in human rhabdomyosarcoma TE 671 cell line with an IC(50) of 48.2 mM. This neurotoxin is lethal to mice by intraperitoneal injection and to zebrafish by injection at the back of the dorsolateral region. The chain is Three-finger toxin MS1 from Micrurus surinamensis (Surinam coral snake).